A 445-amino-acid polypeptide reads, in one-letter code: Argininosuccinate synthase (445 aa).

ATP contacts are provided by residues 17 to 25 (AFSGGLDTS) and alanine 43. L-citrulline is bound at residue tyrosine 99. ATP contacts are provided by glycine 129 and threonine 131. The L-aspartate site is built by threonine 131, asparagine 135, and aspartate 136. Asparagine 135 contacts L-citrulline. Aspartate 136 is an ATP binding site. L-citrulline-binding residues include arginine 139 and serine 192. Aspartate 194 contributes to the ATP binding site. Residues threonine 201, glutamate 203, and glutamate 280 each contribute to the L-citrulline site.

The protein belongs to the argininosuccinate synthase family. Type 2 subfamily. Homotetramer.

It is found in the cytoplasm. It carries out the reaction L-citrulline + L-aspartate + ATP = 2-(N(omega)-L-arginino)succinate + AMP + diphosphate + H(+). It functions in the pathway amino-acid biosynthesis; L-arginine biosynthesis; L-arginine from L-ornithine and carbamoyl phosphate: step 2/3. The polypeptide is Argininosuccinate synthase (Rhodopseudomonas palustris (strain BisB5)).